We begin with the raw amino-acid sequence, 84 residues long: Small ribosomal subunit protein bS18B (84 aa).

It belongs to the bacterial ribosomal protein bS18 family. Part of the 30S ribosomal subunit. Forms a tight heterodimer with protein bS6.

Functionally, binds as a heterodimer with protein bS6 to the central domain of the 16S rRNA, where it helps stabilize the platform of the 30S subunit. This chain is Small ribosomal subunit protein bS18B, found in Mycolicibacterium smegmatis (strain ATCC 700084 / mc(2)155) (Mycobacterium smegmatis).